Consider the following 79-residue polypeptide: UPF0291 protein BH2353 (79 aa).

Residues G57–H79 are disordered. Residues T63 to H79 show a composition bias toward basic and acidic residues.

Belongs to the UPF0291 family.

The protein localises to the cytoplasm. This Halalkalibacterium halodurans (strain ATCC BAA-125 / DSM 18197 / FERM 7344 / JCM 9153 / C-125) (Bacillus halodurans) protein is UPF0291 protein BH2353.